Consider the following 159-residue polypeptide: MSSILSSNFTNKSNQLVNESAVDSSLTASPCSTQPGDVGWCFDAPHGVLTKLPNETRAIVSAVSPNWRVTSIGEKTLAIMIPHDQPVLGISKKNFVDLLEFAEDKLEMERVLAVFEKARINPTEGFPRTLRYVGFRPYAIDEHPVHLPAEKYFIMSYKV.

This sequence belongs to the ODC antizyme family. In terms of assembly, interacts with ODC1 and thereby sterically blocks ODC homodimerization.

Functionally, ornithine decarboxylase (ODC) antizyme protein that negatively regulates ODC activity and intracellular polyamine biosynthesis and uptake in response to increased intracellular polyamine levels. Binds to ODC monomers, inhibiting the assembly of the functional ODC homodimer, and targets the monomers for ubiquitin-independent proteolytic destruction by the 26S proteasome. The chain is Ornithine decarboxylase antizyme from Caenorhabditis elegans.